A 121-amino-acid polypeptide reads, in one-letter code: uncharacterized protein (121 aa).

Residues 7–121 enclose the HIT domain; sequence IFCKIVRGEV…GGREMSWPPG (115 aa). The Histidine triad motif signature appears at 105–109; sequence HLHLH.

This is an uncharacterized protein from Aquifex aeolicus (strain VF5).